Consider the following 493-residue polypeptide: Adenylyltransferase and sulfurtransferase uba4 (493 aa).

Residues Gly-99, Asp-120, 127-131 (SNLHR), Lys-144, and 188-189 (DN) each bind ATP. The Zn(2+) site is built by Cys-237 and Cys-240. The Glycyl thioester intermediate; for adenylyltransferase activity role is filled by Cys-254. Zn(2+)-binding residues include Cys-316 and Cys-319. The 116-residue stretch at 376–491 (INKEPTIIDV…WREQIDPDWP (116 aa)) folds into the Rhodanese domain. The active-site Cysteine persulfide intermediate; for sulfurtransferase activity is the Cys-446.

This sequence in the N-terminal section; belongs to the HesA/MoeB/ThiF family. UBA4 subfamily. Requires Zn(2+) as cofactor.

The protein localises to the cytoplasm. The protein resides in the cytosol. It carries out the reaction [molybdopterin-synthase sulfur-carrier protein]-C-terminal Gly-Gly + ATP + H(+) = [molybdopterin-synthase sulfur-carrier protein]-C-terminal Gly-Gly-AMP + diphosphate. The catalysed reaction is [molybdopterin-synthase sulfur-carrier protein]-C-terminal Gly-Gly-AMP + S-sulfanyl-L-cysteinyl-[cysteine desulfurase] + AH2 = [molybdopterin-synthase sulfur-carrier protein]-C-terminal-Gly-aminoethanethioate + L-cysteinyl-[cysteine desulfurase] + A + AMP + 2 H(+). It participates in tRNA modification; 5-methoxycarbonylmethyl-2-thiouridine-tRNA biosynthesis. It functions in the pathway cofactor biosynthesis; molybdopterin biosynthesis. Its function is as follows. Plays a central role in 2-thiolation of mcm(5)S(2)U at tRNA wobble positions of cytosolic tRNA(Lys), tRNA(Glu) and tRNA(Gln). Also essential during biosynthesis of the molybdenum cofactor. Acts by mediating the C-terminal thiocarboxylation of sulfur carriers urm1 and mocs2a. Its N-terminus first activates urm1 and mocs2a as acyl-adenylates (-COAMP), then the persulfide sulfur on the catalytic cysteine is transferred to urm1 and mocs2a to form thiocarboxylation (-COSH) of their C-terminus. The reaction probably involves hydrogen sulfide that is generated from the persulfide intermediate and that acts as a nucleophile towards urm1 and mocs2a. Subsequently, a transient disulfide bond is formed. Does not use thiosulfate as sulfur donor; nfs1 probably acting as a sulfur donor for thiocarboxylation reactions. This chain is Adenylyltransferase and sulfurtransferase uba4, found in Aspergillus fumigatus (strain ATCC MYA-4609 / CBS 101355 / FGSC A1100 / Af293) (Neosartorya fumigata).